We begin with the raw amino-acid sequence, 530 residues long: MKFVEIRDLQVTYMGKDKPSIVVDKLDIEEGESVLITGRSGSGKSTLVSVINGVIPHLINAEIKGEVRVFGFDVKSTPIHEISKYVGTLLQDPDTQAFNYTIIDEVAFGVENYMISRDEMIERVEESMKIYGISHLRDREINTLSGGELQRTILASVLAMRPKALILDEPTSNIDPQGTREILELVKTFRSEGISLVLVEHKIERVLPFVDRIIVVEEGKIAVDVRKDEIVDKADFLYSLGLEIPDYMLFLKKNGFRKIDYEYLRKTYTYRPPSRIGGKGEALYASVKVKTKNGIYLINTKISLKQGTITALMGKNGSGKTTLLKVIVGLIDKKRLIVEEEKVIVNGVDLSKTKLVERGKFIAYLPQFFDVMFIKRTVEDEIKFSMKNRGTYDEKRLGEVLKMFSLDAYRKEDPLVLSMGQRRRVAMASVLAGGAKVILMDEPTSGQDWYHRQILGKELLELRDKGYTILVVTHDSRFVDRFADYLLVMNEGKIVLEGKPEEVFIKSLRHGIEPPLEYELGGLIKNEHFS.

ABC transporter domains are found at residues 6–243 and 282–516; these read IRDL…LGLE and ALYA…EPPL. ATP contacts are provided by residues 38 to 45 and 314 to 321; these read GRSGSGKS and GKNGSGKT.

The protein belongs to the ABC transporter superfamily.

It localises to the cell membrane. Functionally, probably part of an ABC transporter complex. Responsible for energy coupling to the transport system. This Saccharolobus solfataricus (strain ATCC 35092 / DSM 1617 / JCM 11322 / P2) (Sulfolobus solfataricus) protein is Putative ABC transporter ATP-binding protein SSO2030.